Reading from the N-terminus, the 1096-residue chain is MGSEDHGAQNPSCKIMTFRPTMEEFKDFNKYVAYIESQGAHRAGLAKIIPPKEWKPRQTYDDIDDVVIPAPIQQVVTGQSGLFTQYNIQKKAMTVGEYRRLANSEKYCTPRHQDFDDLERKYWKNLTFVSPIYGADISGSLYDDDVAQWNIGSLRTILDMVERECGTIIEGVNTPYLYFGMWKTTFAWHTEDMDLYSINYLHFGEPKSWYAIPPEHGKRLERLAIGFFPGSSQGCDAFLRHKMTLISPIILKKYGIPFSRITQEAGEFMITFPYGYHAGFNHGFNCAESTNFATLRWIDYGKVATQCTCRKDMVKISMDVFVRILQPERYELWKQGKDLTVLDHTRPTALTSPELSSWSASRASLKAKLLRRSHRKRSQPKKPKPEDPKFPGEGTAGAALLEEAGGSVKEEAGPEVDPEEEEEEPQPLPHGREAEGAEEDGRGKLRPTKAKSERKKKSFGLLPPQLPPPPAHFPSEEALWLPSPLEPPVLGPGPAAMEESPLPAPLNVVPPEVPSEELEAKPRPIIPMLYVVPRPGKAAFNQEHVSCQQAFEHFAQKGPTWKEPVSPMELTGPEDGAASSGAGRMETKARAGEGQAPSTFSKLKMEIKKSRRHPLGRPPTRSPLSVVKQEASSDEEASPFSGEEDVSDPDALRPLLSLQWKNRAASFQAERKFNAAAARTEPYCAICTLFYPYCQALQTEKEAPIASLGKGCPATLPSKSRQKTRPLIPEMCFTSGGENTEPLPANSYIGDDGTSPLIACGKCCLQVHASCYGIRPELVNEGWTCSRCAAHAWTAECCLCNLRGGALQMTTDRRWIHVICAIAVPEARFLNVIERHPVDISAIPEQRWKLKCVYCRKRMKKVSGACIQCSYEHCSTSFHVTCAHAAGVLMEPDDWPYVVSITCLKHKSGGHAVQLLRAVSLGQVVITKNRNGLYYRCRVIGAASQTCYEVNFDDGSYSDNLYPESITSRDCVQLGPPSEGELVELRWTDGNLYKAKFISSVTSHIYQVEFEDGSQLTVKRGDIFTLEEELPKRVRSRLSLSTGAPQEPAFSGEEAKAAKRPRVGTPLATEDSGRSQDYVAFVESLLQVQGRPGAPF.

Residues 15-57 (IMTFRPTMEEFKDFNKYVAYIESQGAHRAGLAKIIPPKEWKPR) enclose the JmjN domain. 2-oxoglutarate is bound at residue Tyr-133. In terms of domain architecture, JmjC spans 146–309 (VAQWNIGSLR…YGKVATQCTC (164 aa)). Fe cation contacts are provided by His-189 and Glu-191. 2 residues coordinate 2-oxoglutarate: Asn-199 and Lys-207. Residues Cys-235 and His-241 each contribute to the Zn(2+) site. Residue Lys-242 participates in 2-oxoglutarate binding. Residue His-277 participates in Fe cation binding. The Zn(2+) site is built by Cys-307 and Cys-309. Over residues 369-382 (LLRRSHRKRSQPKK) the composition is skewed to basic residues. 2 disordered regions span residues 369–478 (LLRR…SEEA) and 557–649 (KGPT…VSDP). Residues 391 to 406 (PGEGTAGAALLEEAGG) are compositionally biased toward low complexity. A compositionally biased stretch (acidic residues) spans 413-425 (GPEVDPEEEEEEP). Residues 430-443 (HGREAEGAEEDGRG) are compositionally biased toward basic and acidic residues. Over residues 444–458 (KLRPTKAKSERKKKS) the composition is skewed to basic residues. Position 566 is a phosphoserine (Ser-566). Lys-602 is modified (N6-acetyllysine). Over residues 632 to 648 (SSDEEASPFSGEEDVSD) the composition is skewed to acidic residues. The PHD-type 1 zinc finger occupies 731–789 (MCFTSGGENTEPLPANSYIGDDGTSPLIACGKCCLQVHASCYGIRPELVNEGWTCSRCA). The C2HC pre-PHD-type zinc finger occupies 794 to 827 (TAECCLCNLRGGALQMTTDRRWIHVICAIAVPEA). The PHD-type 2 zinc-finger motif lies at 850 to 907 (LKCVYCRKRMKKVSGACIQCSYEHCSTSFHVTCAHAAGVLMEPDDWPYVVSITCLKHK). Tudor domains lie at 917 to 974 (RAVS…CVQL) and 975 to 1031 (GPPS…EELP). The disordered stretch occupies residues 1037–1073 (RLSLSTGAPQEPAFSGEEAKAAKRPRVGTPLATEDSG). A Phosphothreonine modification is found at Thr-1065.

Belongs to the JHDM3 histone demethylase family. Requires Fe(2+) as cofactor.

Its subcellular location is the nucleus. It catalyses the reaction N(6),N(6),N(6)-trimethyl-L-lysyl(9)-[histone H3] + 2 2-oxoglutarate + 2 O2 = N(6)-methyl-L-lysyl(9)-[histone H3] + 2 formaldehyde + 2 succinate + 2 CO2. In terms of biological role, histone demethylase that specifically demethylates 'Lys-9' of histone H3, thereby playing a role in histone code. Does not demethylate histone H3 'Lys-4', H3 'Lys-27', H3 'Lys-36' nor H4 'Lys-20'. Only able to demethylate trimethylated H3 'Lys-9', with a weaker activity than KDM4A, KDM4C and KDM4D. Demethylation of Lys residue generates formaldehyde and succinate. Plays a critical role in the development of the central nervous system (CNS). The protein is Lysine-specific demethylase 4B (KDM4B) of Homo sapiens (Human).